Consider the following 512-residue polypeptide: AMP phosphorylase (512 aa).

AMP contacts are provided by residues G166, S192–G197, and T201. Catalysis depends on D254, which acts as the Proton donor. The AMP site is built by S262 and K286.

The protein belongs to the thymidine/pyrimidine-nucleoside phosphorylase family. Type 2 subfamily.

It carries out the reaction AMP + phosphate = alpha-D-ribose 1,5-bisphosphate + adenine. It catalyses the reaction CMP + phosphate = cytosine + alpha-D-ribose 1,5-bisphosphate. The catalysed reaction is UMP + phosphate = alpha-D-ribose 1,5-bisphosphate + uracil. Its function is as follows. Catalyzes the conversion of AMP and phosphate to adenine and ribose 1,5-bisphosphate (R15P). Exhibits phosphorylase activity toward CMP and UMP in addition to AMP. Functions in an archaeal AMP degradation pathway, together with R15P isomerase and RubisCO. The polypeptide is AMP phosphorylase (Methanothrix thermoacetophila (strain DSM 6194 / JCM 14653 / NBRC 101360 / PT) (Methanosaeta thermophila)).